The following is a 66-amino-acid chain: MSETNKNAFQAGQTAGKAEEKSNVLLDKAKDAAAGAGAGAQQAGKSVSDAAAGGVNFVKDKTGLNK.

Over residues 1-13 (MSETNKNAFQAGQ) the composition is skewed to polar residues. The tract at residues 1–52 (MSETNKNAFQAGQTAGKAEEKSNVLLDKAKDAAAGAGAGAQQAGKSVSDAAA) is disordered. The segment covering 17 to 31 (KAEEKSNVLLDKAKD) has biased composition (basic and acidic residues). Repeats lie at residues 31-35 (DAAAG) and 49-53 (DAAAG). The span at 32–45 (AAAGAGAGAQQAGK) shows a compositional bias: low complexity.

This chain is Stress-induced protein KIN1 (KIN1), found in Arabidopsis thaliana (Mouse-ear cress).